A 97-amino-acid polypeptide reads, in one-letter code: Aspartyl/glutamyl-tRNA(Asn/Gln) amidotransferase subunit C (97 aa).

Belongs to the GatC family. In terms of assembly, heterotrimer of A, B and C subunits.

The enzyme catalyses L-glutamyl-tRNA(Gln) + L-glutamine + ATP + H2O = L-glutaminyl-tRNA(Gln) + L-glutamate + ADP + phosphate + H(+). It carries out the reaction L-aspartyl-tRNA(Asn) + L-glutamine + ATP + H2O = L-asparaginyl-tRNA(Asn) + L-glutamate + ADP + phosphate + 2 H(+). Functionally, allows the formation of correctly charged Asn-tRNA(Asn) or Gln-tRNA(Gln) through the transamidation of misacylated Asp-tRNA(Asn) or Glu-tRNA(Gln) in organisms which lack either or both of asparaginyl-tRNA or glutaminyl-tRNA synthetases. The reaction takes place in the presence of glutamine and ATP through an activated phospho-Asp-tRNA(Asn) or phospho-Glu-tRNA(Gln). In Sulfolobus acidocaldarius (strain ATCC 33909 / DSM 639 / JCM 8929 / NBRC 15157 / NCIMB 11770), this protein is Aspartyl/glutamyl-tRNA(Asn/Gln) amidotransferase subunit C.